Here is a 220-residue protein sequence, read N- to C-terminus: Deoxyribose-phosphate aldolase 1 (220 aa).

The active-site Proton donor/acceptor is Asp89. Lys151 serves as the catalytic Schiff-base intermediate with acetaldehyde. The active-site Proton donor/acceptor is Lys180.

This sequence belongs to the DeoC/FbaB aldolase family. DeoC type 1 subfamily.

The protein localises to the cytoplasm. It carries out the reaction 2-deoxy-D-ribose 5-phosphate = D-glyceraldehyde 3-phosphate + acetaldehyde. It functions in the pathway carbohydrate degradation; 2-deoxy-D-ribose 1-phosphate degradation; D-glyceraldehyde 3-phosphate and acetaldehyde from 2-deoxy-alpha-D-ribose 1-phosphate: step 2/2. Its function is as follows. Catalyzes a reversible aldol reaction between acetaldehyde and D-glyceraldehyde 3-phosphate to generate 2-deoxy-D-ribose 5-phosphate. The sequence is that of Deoxyribose-phosphate aldolase 1 from Staphylococcus aureus (strain MSSA476).